Consider the following 444-residue polypeptide: MPSIVLPPKPTALQKPHINLAVVGHVDNGKSTLVGRLLYETGYVDEKAFKEIEEMAKKMGKEDFAFAWILDRFKEERERGVTIEATHVGFETQKLFITIIDLPGHRDFVKNMIVGASQADAALFVISARPGEFETAIGPQGQGREHLFLIRTLGIQQLVVAVNKMDAVNYDQKRYEQVKAEVSKLLKLLGYDPSKIHFVPVSAIKGDNVRTKSPNTPWYQGPTLLEVLDTFQPPPRPTDKPLRMPIQDVFSITGAGTVVVGRVETGVLKVGDKVVIVPPAKVGDVRSIETHHMKLEQAQPGDNVGVNVRGINKEDVKRGDVLGKVDNIPTVAEEIVARIVVLWHPTAIGPGYAPVMHIHTATVPVQIVELVSKLDPRTGQAVEQKPQFIKQGDVAIVKIKPLKPVVAEKFSDFPPLGRFALRDMGRTIAAGQILEVKPAQVQIK.

The 222-residue stretch at 15 to 236 (KPHINLAVVG…VLDTFQPPPR (222 aa)) folds into the tr-type G domain. The tract at residues 24–31 (GHVDNGKS) is G1. 24–31 (GHVDNGKS) serves as a coordination point for GTP. Residue Ser31 coordinates Mg(2+). A G2 region spans residues 80 to 84 (GVTIE). The interval 101 to 104 (DLPG) is G3. Residues 101–105 (DLPGH) and 163–166 (NKMD) each bind GTP. Residues 163–166 (NKMD) form a G4 region. The segment at 202–204 (SAI) is G5.

The protein belongs to the TRAFAC class translation factor GTPase superfamily. Classic translation factor GTPase family. EF-Tu/EF-1A subfamily.

Its subcellular location is the cytoplasm. The enzyme catalyses GTP + H2O = GDP + phosphate + H(+). Functionally, GTP hydrolase that promotes the GTP-dependent binding of aminoacyl-tRNA to the A-site of ribosomes during protein biosynthesis. The protein is Elongation factor 1-alpha of Pyrobaculum calidifontis (strain DSM 21063 / JCM 11548 / VA1).